The primary structure comprises 204 residues: Phosphopantothenoylcysteine decarboxylase (204 aa).

FMN contacts are provided by residues T53 and 104 to 107 (DANT). Substrate is bound at residue N140. C173 serves as the catalytic Proton donor.

This sequence belongs to the HFCD (homooligomeric flavin containing Cys decarboxylase) superfamily. As to quaternary structure, homotrimer. Requires FMN as cofactor.

The enzyme catalyses N-[(R)-4-phosphopantothenoyl]-L-cysteine + H(+) = (R)-4'-phosphopantetheine + CO2. It functions in the pathway cofactor biosynthesis; coenzyme A biosynthesis; CoA from (R)-pantothenate: step 3/5. Functionally, catalyzes the decarboxylation of the cysteine moiety of 4-phosphopantothenoylcysteine to form 4'-phosphopantotheine and this reaction forms part of the biosynthesis of coenzyme A. This chain is Phosphopantothenoylcysteine decarboxylase (Ppcdc), found in Mus musculus (Mouse).